The sequence spans 1801 residues: Laminin subunit beta-2 (1801 aa).

Positions M1 to A35 are cleaved as a signal peptide. In terms of domain architecture, Laminin N-terminal spans S46–N285. N-linked (GlcNAc...) asparagine glycosylation occurs at N251. 19 cysteine pairs are disulfide-bonded: C286/C295, C288/C313, C315/C324, C327/C347, C350/C359, C352/C377, C380/C389, C392/C410, C413/C426, C415/C441, C443/C452, C455/C470, C473/C487, C475/C494, C496/C505, C508/C522, C525/C537, C527/C544, and C546/C555. Laminin EGF-like domains follow at residues C286 to K349, C350 to P412, C413 to R472, and C473 to P524. A glycan (N-linked (GlcNAc...) asparagine) is linked at N371. Positions C525–C555 constitute a Laminin EGF-like 5; truncated domain. The Laminin IV type B domain maps to R564–Y780. 32 disulfide bridges follow: C786–C798, C788–C805, C807–C816, C819–C831, C834–C846, C836–C853, C855–C864, C867–C877, C880–C889, C882–C896, C899–C908, C911–C927, C930–C946, C932–C957, C959–C968, C971–C986, C989–C1003, C991–C1010, C1013–C1022, C1025–C1038, C1041–C1061, C1043–C1068, C1070–C1079, C1082–C1095, C1098–C1110, C1100–C1117, C1119–C1128, C1131–C1143, C1146–C1158, C1148–C1165, C1167–C1176, and C1179–C1190. Laminin EGF-like domains lie at C786 to A833, C834 to P879, C880 to P929, C930 to L988, C989 to R1040, C1041 to P1097, C1098 to A1145, and C1146 to P1192. A glycan (N-linked (GlcNAc...) asparagine) is linked at N1088. The tract at residues C1193–V1412 is domain II. N1252 carries an N-linked (GlcNAc...) asparagine glycan. Positions A1259–D1306 form a coiled coil. 2 N-linked (GlcNAc...) asparagine glycosylation sites follow: N1311 and N1351. The segment at C1413 to C1445 is domain alpha. The segment at S1446 to Q1801 is domain I. Residues G1475 to E1529 adopt a coiled-coil conformation. An N-linked (GlcNAc...) asparagine glycan is attached at N1502. Residue S1535 is modified to Phosphoserine. Residues L1576–Q1793 are a coiled coil. Over residues A1684 to A1694 the composition is skewed to low complexity. Residues A1684–K1703 form a disordered region.

In terms of assembly, laminin is a complex glycoprotein, consisting of three different polypeptide chains (alpha, beta, gamma), which are bound to each other by disulfide bonds into a cross-shaped molecule comprising one long and three short arms with globules at each end. Beta-2 is a subunit of laminin-3 (laminin-121 or S-laminin), laminin-4 (laminin-221 or S-merosin), laminin-7 (laminin-321 or KS-laminin), laminin-9 (laminin-421), laminin-11 (laminin-521), laminin-14 (laminin-423) and laminin-15 (laminin-523). Found in the basement membranes (major component). S-laminin is concentrated in the synaptic cleft of the neuromuscular junction.

It is found in the secreted. The protein resides in the extracellular space. Its subcellular location is the extracellular matrix. The protein localises to the basement membrane. In terms of biological role, binding to cells via a high affinity receptor, laminin is thought to mediate the attachment, migration and organization of cells into tissues during embryonic development by interacting with other extracellular matrix components. This is Laminin subunit beta-2 (Lamb2) from Rattus norvegicus (Rat).